We begin with the raw amino-acid sequence, 323 residues long: MELFKQVRILSFMRYSNYGVIVSAILVLLALGLLFFKGFSLGIDFAGGSLVQVRYTQNAPIKEVRDLFEKEARFKGVQVSEFGSKEEILIKFPFVETAENEDLNAIVANILKPSGDFEIRKFDTVGPRVGSELKEKGILSLILALIAIMVYVSFRYEWRFALASVVALVHDVILVASSVIVFKIDMNLEVIAALLTLIGYSINDTIIIFDRIREEMLSQKTKNATQAIDEAISSTLTRTLLTSLTVFFVVLILCVFGSKIIIGFSLPMLIGTIVGTYSSIFIAPKVALLLGFDMGKYYENEARKIKKAQEKEKMRRLYEGGQV.

6 helical membrane-spanning segments follow: residues 19–39 (GVIVSAILVLLALGLLFFKGF), 138–158 (ILSLILALIAIMVYVSFRYEW), 162–182 (LASVVALVHDVILVASSVIVF), 189–209 (EVIAALLTLIGYSINDTIIIF), 244–264 (LTVFFVVLILCVFGSKIIIGF), and 269–289 (LIGTIVGTYSSIFIAPKVALL).

Belongs to the SecD/SecF family. SecF subfamily. As to quaternary structure, forms a complex with SecD. Part of the essential Sec protein translocation apparatus which comprises SecA, SecYEG and auxiliary proteins SecDF-YajC and YidC.

The protein localises to the cell inner membrane. In terms of biological role, part of the Sec protein translocase complex. Interacts with the SecYEG preprotein conducting channel. SecDF uses the proton motive force (PMF) to complete protein translocation after the ATP-dependent function of SecA. This Helicobacter pylori (strain J99 / ATCC 700824) (Campylobacter pylori J99) protein is Protein translocase subunit SecF.